The chain runs to 573 residues: 2-succinyl-5-enolpyruvyl-6-hydroxy-3-cyclohexene-1-carboxylate synthase (573 aa).

This sequence belongs to the TPP enzyme family. MenD subfamily. Homodimer. Mg(2+) serves as cofactor. Requires Mn(2+) as cofactor. Thiamine diphosphate is required as a cofactor.

The catalysed reaction is isochorismate + 2-oxoglutarate + H(+) = 5-enolpyruvoyl-6-hydroxy-2-succinyl-cyclohex-3-ene-1-carboxylate + CO2. It participates in quinol/quinone metabolism; 1,4-dihydroxy-2-naphthoate biosynthesis; 1,4-dihydroxy-2-naphthoate from chorismate: step 2/7. The protein operates within quinol/quinone metabolism; menaquinone biosynthesis. Catalyzes the thiamine diphosphate-dependent decarboxylation of 2-oxoglutarate and the subsequent addition of the resulting succinic semialdehyde-thiamine pyrophosphate anion to isochorismate to yield 2-succinyl-5-enolpyruvyl-6-hydroxy-3-cyclohexene-1-carboxylate (SEPHCHC). In Shewanella baltica (strain OS195), this protein is 2-succinyl-5-enolpyruvyl-6-hydroxy-3-cyclohexene-1-carboxylate synthase.